The sequence spans 102 residues: Aspartyl/glutamyl-tRNA(Asn/Gln) amidotransferase subunit C (102 aa).

The protein belongs to the GatC family. In terms of assembly, heterotrimer of A, B and C subunits.

The enzyme catalyses L-glutamyl-tRNA(Gln) + L-glutamine + ATP + H2O = L-glutaminyl-tRNA(Gln) + L-glutamate + ADP + phosphate + H(+). It carries out the reaction L-aspartyl-tRNA(Asn) + L-glutamine + ATP + H2O = L-asparaginyl-tRNA(Asn) + L-glutamate + ADP + phosphate + 2 H(+). Allows the formation of correctly charged Asn-tRNA(Asn) or Gln-tRNA(Gln) through the transamidation of misacylated Asp-tRNA(Asn) or Glu-tRNA(Gln) in organisms which lack either or both of asparaginyl-tRNA or glutaminyl-tRNA synthetases. The reaction takes place in the presence of glutamine and ATP through an activated phospho-Asp-tRNA(Asn) or phospho-Glu-tRNA(Gln). This chain is Aspartyl/glutamyl-tRNA(Asn/Gln) amidotransferase subunit C, found in Bordetella pertussis (strain Tohama I / ATCC BAA-589 / NCTC 13251).